The sequence spans 84 residues: Large ribosomal subunit protein bL27 (84 aa).

Residues 1 to 21 form a disordered region; that stretch reads MAHKKGGGSTKNGRDSNPKYL.

Belongs to the bacterial ribosomal protein bL27 family.

The polypeptide is Large ribosomal subunit protein bL27 (Chlorobium phaeovibrioides (strain DSM 265 / 1930) (Prosthecochloris vibrioformis (strain DSM 265))).